The following is a 139-amino-acid chain: ATP synthase epsilon chain (139 aa).

Belongs to the ATPase epsilon chain family. As to quaternary structure, F-type ATPases have 2 components, CF(1) - the catalytic core - and CF(0) - the membrane proton channel. CF(1) has five subunits: alpha(3), beta(3), gamma(1), delta(1), epsilon(1). CF(0) has three main subunits: a, b and c.

It is found in the cell inner membrane. Its function is as follows. Produces ATP from ADP in the presence of a proton gradient across the membrane. The chain is ATP synthase epsilon chain from Salmonella typhimurium (strain LT2 / SGSC1412 / ATCC 700720).